A 164-amino-acid chain; its full sequence is Crossover junction endodeoxyribonuclease RuvC (164 aa).

Active-site residues include Asp-7, Glu-66, and Asp-138. 3 residues coordinate Mg(2+): Asp-7, Glu-66, and Asp-138.

The protein belongs to the RuvC family. Homodimer which binds Holliday junction (HJ) DNA. The HJ becomes 2-fold symmetrical on binding to RuvC with unstacked arms; it has a different conformation from HJ DNA in complex with RuvA. In the full resolvosome a probable DNA-RuvA(4)-RuvB(12)-RuvC(2) complex forms which resolves the HJ. Mg(2+) serves as cofactor.

It localises to the cytoplasm. The catalysed reaction is Endonucleolytic cleavage at a junction such as a reciprocal single-stranded crossover between two homologous DNA duplexes (Holliday junction).. The RuvA-RuvB-RuvC complex processes Holliday junction (HJ) DNA during genetic recombination and DNA repair. Endonuclease that resolves HJ intermediates. Cleaves cruciform DNA by making single-stranded nicks across the HJ at symmetrical positions within the homologous arms, yielding a 5'-phosphate and a 3'-hydroxyl group; requires a central core of homology in the junction. The consensus cleavage sequence is 5'-(A/T)TT(C/G)-3'. Cleavage occurs on the 3'-side of the TT dinucleotide at the point of strand exchange. HJ branch migration catalyzed by RuvA-RuvB allows RuvC to scan DNA until it finds its consensus sequence, where it cleaves and resolves the cruciform DNA. The polypeptide is Crossover junction endodeoxyribonuclease RuvC (Paracoccus denitrificans (strain Pd 1222)).